Here is a 768-residue protein sequence, read N- to C-terminus: DNA ligase (768 aa).

The span at 1-11 (MSPSAPANSAP) shows a compositional bias: low complexity. The tract at residues 1 to 28 (MSPSAPANSAPDPDRNGVPDVGPASAAP) is disordered. NAD(+) contacts are provided by residues 62 to 66 (DAEYD), 111 to 112 (SI), and E148. K150 functions as the N6-AMP-lysine intermediate in the catalytic mechanism. NAD(+) is bound by residues R171, E238, K361, and K385. Residues C484, C487, C502, and C508 each coordinate Zn(2+). The region spanning 670–759 (AAELPLAGKT…EADADADAEG (90 aa)) is the BRCT domain.

This sequence belongs to the NAD-dependent DNA ligase family. LigA subfamily. Requires Mg(2+) as cofactor. It depends on Mn(2+) as a cofactor.

The enzyme catalyses NAD(+) + (deoxyribonucleotide)n-3'-hydroxyl + 5'-phospho-(deoxyribonucleotide)m = (deoxyribonucleotide)n+m + AMP + beta-nicotinamide D-nucleotide.. Functionally, DNA ligase that catalyzes the formation of phosphodiester linkages between 5'-phosphoryl and 3'-hydroxyl groups in double-stranded DNA using NAD as a coenzyme and as the energy source for the reaction. It is essential for DNA replication and repair of damaged DNA. In Leptothrix cholodnii (strain ATCC 51168 / LMG 8142 / SP-6) (Leptothrix discophora (strain SP-6)), this protein is DNA ligase.